We begin with the raw amino-acid sequence, 69 residues long: Pancreatic secretory trypsin inhibitor (69 aa).

Positions 8–65 constitute a Kazal-like domain; that stretch reads TGTEAACSNYDLKKGCAKIFDPVCGTDNILYSNECLLCFQNLQRKTNVRIKRRGTCQE. Cystine bridges form between C14/C45, C23/C42, and C31/C63.

Its subcellular location is the secreted. Its function is as follows. This is a trypsin inhibitor, its physiological function is to prevent the trypsin-catalyzed premature activation of zymogens within the pancreas. The protein is Pancreatic secretory trypsin inhibitor (SPINK1) of Struthio camelus (Common ostrich).